We begin with the raw amino-acid sequence, 62 residues long: Glucagon (62 aa).

This sequence belongs to the glucagon family.

Its subcellular location is the secreted. Its function is as follows. Promotes hydrolysis of glycogen and lipids, and raises the blood sugar level. The polypeptide is Glucagon (gcg) (Scyliorhinus canicula (Small-spotted catshark)).